A 380-amino-acid polypeptide reads, in one-letter code: tRNA-specific 2-thiouridylase MnmA (380 aa).

ATP is bound by residues 10 to 17 (AMSGGVDS) and L36. C106 functions as the Nucleophile in the catalytic mechanism. A disulfide bond links C106 and C202. An ATP-binding site is contributed by G130. The interaction with tRNA stretch occupies residues 152-154 (KNQ). C202 (cysteine persulfide intermediate) is an active-site residue. Residues 308-309 (RY) form an interaction with tRNA region.

It belongs to the MnmA/TRMU family.

The protein localises to the cytoplasm. The catalysed reaction is S-sulfanyl-L-cysteinyl-[protein] + uridine(34) in tRNA + AH2 + ATP = 2-thiouridine(34) in tRNA + L-cysteinyl-[protein] + A + AMP + diphosphate + H(+). Its function is as follows. Catalyzes the 2-thiolation of uridine at the wobble position (U34) of tRNA, leading to the formation of s(2)U34. This is tRNA-specific 2-thiouridylase MnmA from Leptospira biflexa serovar Patoc (strain Patoc 1 / Ames).